Reading from the N-terminus, the 251-residue chain is Exotoxin type A (251 aa).

The N-terminal stretch at 1–30 (MENNKKVLKKMVFFVLVTFLGLTISQEVFA) is a signal peptide. The cysteines at positions 117 and 128 are disulfide-linked.

Belongs to the staphylococcal/streptococcal toxin family.

Functionally, causative agent of the symptoms associated with scarlet fever, have been associated with streptococcal toxic shock-like disease and may play a role in the early events of rheumatic fever. The polypeptide is Exotoxin type A (speA) (Streptococcus pyogenes serotype M18 (strain MGAS8232)).